The following is a 329-amino-acid chain: Phenylalanine--tRNA ligase alpha subunit (329 aa).

Glu254 contributes to the Mg(2+) binding site.

Belongs to the class-II aminoacyl-tRNA synthetase family. Phe-tRNA synthetase alpha subunit type 1 subfamily. In terms of assembly, tetramer of two alpha and two beta subunits. It depends on Mg(2+) as a cofactor.

Its subcellular location is the cytoplasm. The catalysed reaction is tRNA(Phe) + L-phenylalanine + ATP = L-phenylalanyl-tRNA(Phe) + AMP + diphosphate + H(+). In Actinobacillus succinogenes (strain ATCC 55618 / DSM 22257 / CCUG 43843 / 130Z), this protein is Phenylalanine--tRNA ligase alpha subunit.